A 1063-amino-acid polypeptide reads, in one-letter code: Retinoblastoma-like protein 1 (1063 aa).

A phosphothreonine mark is found at Thr332, Thr369, and Thr385. Positions 383 to 584 are domain A; it reads VTTPVASATQ…WEALHASANR (202 aa). The segment at 383–944 is pocket; binds T and E1A; that stretch reads VTTPVASATQ…GRVKSFALKY (562 aa). The tract at residues 585-779 is spacer; it reads VPSCEEVIFP…AQDAHLTGVS (195 aa). Phosphoserine occurs at positions 640, 650, 748, and 761. The interval 780-944 is domain B; the sequence is KPKRTGSLAL…GRVKSFALKY (165 aa). Residues Ser959, Ser970, and Ser983 each carry the phosphoserine modification. The residue at position 992 (Thr992) is a Phosphothreonine. A phosphoserine mark is found at Ser1004 and Ser1036.

The protein belongs to the retinoblastoma protein (RB) family. Component of the DREAM complex (also named LINC complex) at least composed of E2F4, E2F5, LIN9, LIN37, LIN52, LIN54, MYBL1, MYBL2, RBL1, RBL2, RBBP4, TFDP1 and TFDP2. The complex exists in quiescent cells where it represses cell cycle-dependent genes. It dissociates in S phase when LIN9, LIN37, LIN52 and LIN54 form a subcomplex that binds to MYBL2. Interacts with AATF. Interacts with KDM5A. Interacts with KMT5B and KMT5C. Interacts with USP4. Interacts with RBBP9. Post-translationally, cell-cycle arrest properties are inactivated by phosphorylation on Thr-332, Ser-640, Ser-959 and Ser-970 by CDK4. Highly expressed in fetal heart and liver. Expressed at low levels in all other fetal tissues except skeletal muscle. High levels in neonatal spleen and thymus with low levels in other tissues. In adult, highly expressed in testis. Barely detectable in other tissues.

Its subcellular location is the nucleus. In terms of biological role, key regulator of entry into cell division. Directly involved in heterochromatin formation by maintaining overall chromatin structure and, in particular, that of constitutive heterochromatin by stabilizing histone methylation. Recruits and targets histone methyltransferases KMT5B and KMT5C, leading to epigenetic transcriptional repression. Controls histone H4 'Lys-20' trimethylation. Probably acts as a transcription repressor by recruiting chromatin-modifying enzymes to promoters. Potent inhibitor of E2F-mediated trans-activation. May act as a tumor suppressor. The chain is Retinoblastoma-like protein 1 (Rbl1) from Mus musculus (Mouse).